The primary structure comprises 410 residues: 2-epi-5-epi-valiolone synthase (410 aa).

NAD(+)-binding positions include Asp66, 97–100 (ETLK), 130–134 (GVLMD), 154–155 (TT), Lys167, Lys176, and 194–197 (FLAT). Lys167 is a catalytic residue. A divalent metal cation-binding residues include Glu209, His280, and His296.

Belongs to the sugar phosphate cyclases superfamily. EEVS family. NAD(+) is required as a cofactor. The cofactor is Co(2+).

The catalysed reaction is D-sedoheptulose 7-phosphate = 2-epi-5-epi-valiolone + phosphate. Functionally, catalyzes the cyclization of D-sedoheptulose 7-phosphate to 2-epi-5-epi-valiolone. Involved in salbostatin biosynthesis. The protein is 2-epi-5-epi-valiolone synthase of Streptomyces albus (strain ATCC 21838 / DSM 41398 / FERM P-419 / JCM 4703 / NBRC 107858).